The chain runs to 669 residues: MKRFAAVSLAALMLLTVFASAASAADVIEIRGPVYNGSDINDIIDTYGENNALTIDATKFAAFYYDIDDNVTTETLSILAVPGTEGNVIGEGGIVYETTIQQVDYEFYRPAAGWSNYSLIGFFAEKYIPINPDKADKLAKLVLDSDDKYTIRTGEQLDLGEGYSIEAKQVDVDGEKVWLEFTKDGEFVDDEIISVVSGSDNTWEVELDDIQDEDDVVVLRVHVNQVFQGAVDSIAQIEGLWLIDYTNAMKIESDDEFGNLDNVKINGDTLTITNEDTFTLTRDDEEEIAEGLFFKTADDTRALRFYAMKQITEPGTYEIRGEVAEGDFSWDATNFAGFFYDVNDDVSTESLTVTGLNGGNVIPEGGLVYETTIQMVDYEYSKPSVGWDQFPVLGFFAEEYIPINADKADKLAKLVLDSDDKYTIRTGEQLDLGEGYAIEAKQVDVDGEKVWLEFTKDGEFVDDEIISVVSGSDNTWEVELDDIQDEDDVVVLRVHVNQVFQGAVDSIAQIEGIWLIDYANAMKIESDDEFGDLDNVKINGATLTITNEDTFTLTRDDEVEIGQGMFFKVADTAASDLRYYPFVEKTIDGEVVDDDEDDDNVTEPVDNDTEVEEPTEEPTEGPTEEPTEGPTTEEPTEEPTEADGTTPGFGVVLGLVGLLAVVYLVRRNN.

The N-terminal stretch at 1 to 24 is a signal peptide; the sequence is MKRFAAVSLAALMLLTVFASAASA. 5 N-linked (GlcNAc...) asparagine glycosylation sites follow: Asn36, Asn70, Asn116, Asn600, and Asn607. The disordered stretch occupies residues 588 to 648; sequence DGEVVDDDED…PTEADGTTPG (61 aa). The segment covering 590-627 has biased composition (acidic residues); it reads EVVDDDEDDDNVTEPVDNDTEVEEPTEEPTEGPTEEPT. A helical membrane pass occupies residues 645–665; the sequence is TTPGFGVVLGLVGLLAVVYLV.

This sequence belongs to the Methanosarcinales S-layer protein family. Glycosylated.

It is found in the secreted. Its subcellular location is the cell wall. The protein resides in the S-layer. The protein localises to the cell membrane. Its function is as follows. S-layer protein. The S-layer is a paracrystalline mono-layered assembly of proteins which coat the surface of the cell. This chain is Major S-layer protein, found in Methanosarcina mazei (strain ATCC BAA-159 / DSM 3647 / Goe1 / Go1 / JCM 11833 / OCM 88) (Methanosarcina frisia).